The following is a 563-amino-acid chain: Lipoprotein LpqB (563 aa).

The signal sequence occupies residues 1–19 (MRRMKALTAAMTAALLVSG). A lipid anchor (N-palmitoyl cysteine) is attached at Cys20. Cys20 is lipidated: S-diacylglycerol cysteine.

It belongs to the LpqB lipoprotein family.

The protein localises to the cell membrane. The polypeptide is Lipoprotein LpqB (Corynebacterium efficiens (strain DSM 44549 / YS-314 / AJ 12310 / JCM 11189 / NBRC 100395)).